Consider the following 261-residue polypeptide: Cytochrome c oxidase subunit 3 (261 aa).

The Mitochondrial matrix segment spans residues 1 to 15 (MTHQTHAYHMVNPSP). A helical transmembrane segment spans residues 16–34 (WPLTGALSALLMTSGLIMW). Residues 35 to 40 (FHFNST) lie on the Mitochondrial intermembrane side of the membrane. Residues 41–66 (TLLMLGLTTNMLTMYQWWRDVIREST) form a helical membrane-spanning segment. The Mitochondrial matrix portion of the chain corresponds to 67–72 (FQGHHT). The helical transmembrane segment at 73-105 (PNVQKGLRYGMILFIISEVLFFTGFFWAFYHSS) threads the bilayer. The Mitochondrial intermembrane segment spans residues 106–128 (LAPTPELGGCWPPTGIHPLNPLE). Residues 129–152 (VPLLNTSVLLASGVSITWAHHSLM) form a helical membrane-spanning segment. Residues 153–155 (EGN) lie on the Mitochondrial matrix side of the membrane. The chain crosses the membrane as a helical span at residues 156–183 (RNHMLQALFITIALGVYFTLLQASEYYE). Over 184–190 (APFTISD) the chain is Mitochondrial intermembrane. Residues 191–223 (GVYGSTFFVATGFHGLHVIIGSTFLIVCFFRQL) form a helical membrane-spanning segment. Residues 224–232 (KFHFTSSHH) lie on the Mitochondrial matrix side of the membrane. A helical membrane pass occupies residues 233 to 256 (FGFEAAAWYWHFVDVVWLFLYVSI). Over 257–261 (YWWGS) the chain is Mitochondrial intermembrane.

The protein belongs to the cytochrome c oxidase subunit 3 family. As to quaternary structure, component of the cytochrome c oxidase (complex IV, CIV), a multisubunit enzyme composed of 14 subunits. The complex is composed of a catalytic core of 3 subunits MT-CO1, MT-CO2 and MT-CO3, encoded in the mitochondrial DNA, and 11 supernumerary subunits COX4I, COX5A, COX5B, COX6A, COX6B, COX6C, COX7A, COX7B, COX7C, COX8 and NDUFA4, which are encoded in the nuclear genome. The complex exists as a monomer or a dimer and forms supercomplexes (SCs) in the inner mitochondrial membrane with NADH-ubiquinone oxidoreductase (complex I, CI) and ubiquinol-cytochrome c oxidoreductase (cytochrome b-c1 complex, complex III, CIII), resulting in different assemblies (supercomplex SCI(1)III(2)IV(1) and megacomplex MCI(2)III(2)IV(2)).

The protein localises to the mitochondrion inner membrane. The catalysed reaction is 4 Fe(II)-[cytochrome c] + O2 + 8 H(+)(in) = 4 Fe(III)-[cytochrome c] + 2 H2O + 4 H(+)(out). In terms of biological role, component of the cytochrome c oxidase, the last enzyme in the mitochondrial electron transport chain which drives oxidative phosphorylation. The respiratory chain contains 3 multisubunit complexes succinate dehydrogenase (complex II, CII), ubiquinol-cytochrome c oxidoreductase (cytochrome b-c1 complex, complex III, CIII) and cytochrome c oxidase (complex IV, CIV), that cooperate to transfer electrons derived from NADH and succinate to molecular oxygen, creating an electrochemical gradient over the inner membrane that drives transmembrane transport and the ATP synthase. Cytochrome c oxidase is the component of the respiratory chain that catalyzes the reduction of oxygen to water. Electrons originating from reduced cytochrome c in the intermembrane space (IMS) are transferred via the dinuclear copper A center (CU(A)) of subunit 2 and heme A of subunit 1 to the active site in subunit 1, a binuclear center (BNC) formed by heme A3 and copper B (CU(B)). The BNC reduces molecular oxygen to 2 water molecules using 4 electrons from cytochrome c in the IMS and 4 protons from the mitochondrial matrix. The polypeptide is Cytochrome c oxidase subunit 3 (MT-CO3) (Gazella bennettii (Chinkara)).